The primary structure comprises 536 residues: DEAD-box ATP-dependent RNA helicase 41 (536 aa).

A compositionally biased stretch (basic and acidic residues) spans 1 to 10 (MEQEENHSAD). Positions 1-25 (MEQEENHSADHLSAQPGNGNELEES) are disordered. The HIT-type zinc-finger motif lies at 40–69 (GEPRCVICGRYGEYICDQTDDDICSVECKT). Positions 137-165 (MCFSSSGLPEKLVLNLEAAGYVMPTPVQM) match the Q motif motif. A Helicase ATP-binding domain is found at 168–344 (IPSSICNRSL…NSLAKNAIHI (177 aa)). 181-188 (ADTGSGKT) lines the ATP pocket. The short motif at 293–296 (DEVD) is the DEAD box element. Residues 355–518 (SVKQVVIWVE…PIPRELANSK (164 aa)) enclose the Helicase C-terminal domain.

It belongs to the DEAD box helicase family. DDX59 subfamily.

It carries out the reaction ATP + H2O = ADP + phosphate + H(+). The chain is DEAD-box ATP-dependent RNA helicase 41 from Oryza sativa subsp. japonica (Rice).